The primary structure comprises 282 residues: 4-diphosphocytidyl-2-C-methyl-D-erythritol kinase (282 aa).

Lys-8 is an active-site residue. 91–101 contributes to the ATP binding site; the sequence is PVAAGLAGGST. The active site involves Asp-133.

This sequence belongs to the GHMP kinase family. IspE subfamily.

The catalysed reaction is 4-CDP-2-C-methyl-D-erythritol + ATP = 4-CDP-2-C-methyl-D-erythritol 2-phosphate + ADP + H(+). Its pathway is isoprenoid biosynthesis; isopentenyl diphosphate biosynthesis via DXP pathway; isopentenyl diphosphate from 1-deoxy-D-xylulose 5-phosphate: step 3/6. In terms of biological role, catalyzes the phosphorylation of the position 2 hydroxy group of 4-diphosphocytidyl-2C-methyl-D-erythritol. This chain is 4-diphosphocytidyl-2-C-methyl-D-erythritol kinase, found in Symbiobacterium thermophilum (strain DSM 24528 / JCM 14929 / IAM 14863 / T).